Here is a 253-residue protein sequence, read N- to C-terminus: Large ribosomal subunit protein uL1m (253 aa).

The N-terminal 81 residues, 1–81 (MSSLIALGKR…SIALKSNRRA (81 aa)), are a transit peptide targeting the mitochondrion.

The protein belongs to the universal ribosomal protein uL1 family. In terms of assembly, component of the mitochondrial large ribosomal subunit (mt-LSU). Mature yeast 74S mitochondrial ribosomes consist of a small (37S) and a large (54S) subunit. The 37S small subunit contains a 15S ribosomal RNA (15S mt-rRNA) and at least 32 different proteins. The 54S large subunit contains a 21S rRNA (21S mt-rRNA) and at least 45 different proteins.

The protein localises to the mitochondrion. Its function is as follows. Component of the mitochondrial ribosome (mitoribosome), a dedicated translation machinery responsible for the synthesis of mitochondrial genome-encoded proteins, including at least some of the essential transmembrane subunits of the mitochondrial respiratory chain. The mitoribosomes are attached to the mitochondrial inner membrane and translation products are cotranslationally integrated into the membrane. This chain is Large ribosomal subunit protein uL1m (mrpl1), found in Schizosaccharomyces pombe (strain 972 / ATCC 24843) (Fission yeast).